The chain runs to 663 residues: DNA ligase 1 (663 aa).

NAD(+) contacts are provided by residues 28–32 and 76–77; these read DKEYD and SL. Residue K118 is the N6-AMP-lysine intermediate of the active site. 3 residues coordinate NAD(+): R139, E173, and K310. Residues C403, C406, C419, and C425 each contribute to the Zn(2+) site. In terms of domain architecture, BRCT spans 583–663; the sequence is VSESVFNDKT…KFEELIESVK (81 aa).

It belongs to the NAD-dependent DNA ligase family. LigA subfamily. Requires Mg(2+) as cofactor. Mn(2+) is required as a cofactor.

The enzyme catalyses NAD(+) + (deoxyribonucleotide)n-3'-hydroxyl + 5'-phospho-(deoxyribonucleotide)m = (deoxyribonucleotide)n+m + AMP + beta-nicotinamide D-nucleotide.. DNA ligase that catalyzes the formation of phosphodiester linkages between 5'-phosphoryl and 3'-hydroxyl groups in double-stranded DNA using NAD as a coenzyme and as the energy source for the reaction. It is essential for DNA replication and repair of damaged DNA. The chain is DNA ligase 1 from Clostridium acetobutylicum (strain ATCC 824 / DSM 792 / JCM 1419 / IAM 19013 / LMG 5710 / NBRC 13948 / NRRL B-527 / VKM B-1787 / 2291 / W).